The chain runs to 45 residues: Pyruvate dehydrogenase E1 component (45 aa).

Homodimer. It depends on thiamine diphosphate as a cofactor.

It carries out the reaction N(6)-[(R)-lipoyl]-L-lysyl-[protein] + pyruvate + H(+) = N(6)-[(R)-S(8)-acetyldihydrolipoyl]-L-lysyl-[protein] + CO2. The pyruvate dehydrogenase complex catalyzes the overall conversion of pyruvate to acetyl-CoA and CO(2). It contains multiple copies of three enzymatic components: pyruvate dehydrogenase (E1), dihydrolipoamide acetyltransferase (E2) and lipoamide dehydrogenase (E3). In Azotobacter vinelandii, this protein is Pyruvate dehydrogenase E1 component.